The primary structure comprises 740 residues: MRQTLPLLLLTVLRPSWADPPQEKVPLFRVTQQGPWGSSGSNATDSPCEGLPAADATALTLANRNLERLPGCLPRTLRSLDASHNLLRALSTSELGHLEQLQVLTLRHNRIAALRWGPGGPAGLHTLDLSYNQLAALPPCTGPALSSLRALALAGNPLRALQPRAFACFPALQLLNLSCTALGRGAQGGIAEAAFAGEDGAPLVTLEVLDLSGTFLERVESGWIRDLPKLTSLYLRKMPRLTTLEGDIFKMTPNLQQLDCQDSPALASVATHIFQDTPHLQVLLFQNCNLSSFPPWTLDSSQVLSINLFGNPLTCSCDLSWLLTDAKRTVLSRAADTMCAPAAGSSGPFSASLSLSQLPGVCQSDQSTTLGASHPPCFNRSTYAQGTTVAPSAAPATRPAGDQQSVSKAPNVGSRTIAAWPHSDAREGTAPSTTNSVAGHSNSSVFPRAASTTRTQHRGEHAPELVLEPDISAASTPLASKLLGPFPTSWDRSISSPQPGQRTHATPQAPNPSLSEGEIPVLLLDDYSEEEEGRKEEVGTPHQDVPCDYHPCKHLQTPCAELQRRWRCRCPGLSGEDTIPDPPRLQGVTETTDTSALVHWCAPNSVVHGYQIRYSAEGWAGNQSVVGVIYATARQHPLYGLSPGTTYRVCVLAANRAGLSQPRSSGWRSPCAAFTTKPSFALLLSGLCAASGLLLASTVVLSACLCRRGQTLGLQRCDTHLVAYKNPAFDDYPLGLQTVS.

An N-terminal signal peptide occupies residues 1–18 (MRQTLPLLLLTVLRPSWA). Topologically, residues 19–679 (DPPQEKVPLF…PCAAFTTKPS (661 aa)) are extracellular. A glycan (N-linked (GlcNAc...) asparagine) is linked at asparagine 42. LRR repeat units follow at residues 51-74 (LPAA…GCLP), 75-97 (RTLR…ELGH), 98-123 (LEQL…GPAG), 125-144 (HTLD…TGPA), 145-168 (LSSL…AFAC), 174-197 (LLNL…AFAG), 203-226 (LVTL…WIRD), 228-251 (PKLT…IFKM), 253-276 (PNLQ…IFQD), and 277-300 (TPHL…TLDS). A glycan (N-linked (GlcNAc...) asparagine) is linked at asparagine 176. 3 N-linked (GlcNAc...) asparagine glycosylation sites follow: asparagine 289, asparagine 379, and asparagine 442. Residues 389–517 (VAPSAAPATR…QAPNPSLSEG (129 aa)) form a disordered region. 2 stretches are compositionally biased toward polar residues: residues 430–454 (APST…STTR) and 490–514 (WDRS…NPSL). The region spanning 579 to 679 (IPDPPRLQGV…PCAAFTTKPS (101 aa)) is the Fibronectin type-III domain. An N-linked (GlcNAc...) asparagine glycan is attached at asparagine 622. Residues 680 to 700 (FALLLSGLCAASGLLLASTVV) form a helical membrane-spanning segment. Over 701 to 740 (LSACLCRRGQTLGLQRCDTHLVAYKNPAFDDYPLGLQTVS) the chain is Cytoplasmic.

It is found in the membrane. May play an important role in hippocampus-dependent long-lasting memory. This chain is Leucine-rich repeat neuronal protein 4 (LRRN4), found in Homo sapiens (Human).